Consider the following 305-residue polypeptide: Popeye domain-containing protein 3 (305 aa).

Residue N4 is glycosylated (N-linked (GlcNAc...) asparagine). 3 helical membrane passes run 34 to 54 (SILFVVGFMGGSGFSGLLYVF), 55 to 75 (SLLGLGFLCSSVWAWLDVCAA), and 77 to 99 (IFSWNFILFAICFVQFIYVTYQV). The interval 273–305 (PETPPVPPPRRLQRRSSGRPRPGVPNCSSPRKQ) is disordered. N298 is a glycosylation site (N-linked (GlcNAc...) asparagine).

It belongs to the popeye family. Expressed first preferentially in atrium and later also in the subepicardial compact layer of the ventricles.

It localises to the membrane. In terms of biological role, may play a role in the maintenance of heart function mediated, at least in part, through cAMP-binding. May play a role in the regulation of KCNK2-mediated current amplitude. In Gallus gallus (Chicken), this protein is Popeye domain-containing protein 3 (POPDC3).